The following is a 151-amino-acid chain: UPF0756 membrane protein GK2737 (151 aa).

4 consecutive transmembrane segments (helical) span residues 5-25 (VLFL…SLIV), 53-73 (WGVT…EIGF), 79-99 (SLQS…ALIA), and 121-141 (ILAV…AGIA).

It belongs to the UPF0756 family.

The protein localises to the cell membrane. In Geobacillus kaustophilus (strain HTA426), this protein is UPF0756 membrane protein GK2737.